The sequence spans 872 residues: Leucine--tRNA ligase (872 aa).

A 'HIGH' region motif is present at residues proline 42–histidine 52. A 'KMSKS' region motif is present at residues lysine 631–serine 635. Residue lysine 634 participates in ATP binding.

This sequence belongs to the class-I aminoacyl-tRNA synthetase family.

It localises to the cytoplasm. It catalyses the reaction tRNA(Leu) + L-leucine + ATP = L-leucyl-tRNA(Leu) + AMP + diphosphate. In Blochmanniella pennsylvanica (strain BPEN), this protein is Leucine--tRNA ligase.